Consider the following 432-residue polypeptide: Serine hydroxymethyltransferase (432 aa).

(6S)-5,6,7,8-tetrahydrofolate contacts are provided by residues Leu127 and 131 to 133; that span reads GHL. The residue at position 236 (Lys236) is an N6-(pyridoxal phosphate)lysine.

This sequence belongs to the SHMT family. As to quaternary structure, homodimer. Requires pyridoxal 5'-phosphate as cofactor.

The protein localises to the cytoplasm. The catalysed reaction is (6R)-5,10-methylene-5,6,7,8-tetrahydrofolate + glycine + H2O = (6S)-5,6,7,8-tetrahydrofolate + L-serine. It functions in the pathway one-carbon metabolism; tetrahydrofolate interconversion. Its pathway is amino-acid biosynthesis; glycine biosynthesis; glycine from L-serine: step 1/1. Its function is as follows. Catalyzes the reversible interconversion of serine and glycine with tetrahydrofolate (THF) serving as the one-carbon carrier. This reaction serves as the major source of one-carbon groups required for the biosynthesis of purines, thymidylate, methionine, and other important biomolecules. Also exhibits THF-independent aldolase activity toward beta-hydroxyamino acids, producing glycine and aldehydes, via a retro-aldol mechanism. In Rhizobium rhizogenes (strain K84 / ATCC BAA-868) (Agrobacterium radiobacter), this protein is Serine hydroxymethyltransferase.